The chain runs to 159 residues: Style cell-cycle inhibitor 1 (159 aa).

Residues 1–86 (MVSERSSKEK…SDHKLKEGIP (86 aa)) form a disordered region. The span at 15–50 (ARSEDSSSSDYEEKVKRHRGTEKDDERRSRRSDKKD) shows a compositional bias: basic and acidic residues. Positions 51-63 (KKSHKHHKSSTSK) are enriched in basic residues. Residues 64–85 (KSKDDKPKKKHTESDHKLKEGI) show a composition bias toward basic and acidic residues.

Its subcellular location is the nucleus. Functionally, component of the auxin signaling transduction pathway that regulates cell proliferation and differentiation during flowers stigmas and styles development. Involved in the regulation of auxin-related genes. This is Style cell-cycle inhibitor 1 from Arabidopsis thaliana (Mouse-ear cress).